A 556-amino-acid chain; its full sequence is Set1/Ash2 histone methyltransferase complex subunit ASH2 (556 aa).

Positions 1–19 are enriched in polar residues; it reads MEDSQMDTSSPTESSSEVN. A disordered region spans residues 1-27; it reads MEDSQMDTSSPTESSSEVNFTAEEDKS. The PHD-type zinc finger occupies 34 to 90; sequence AGVCYCGKERNLNIVELLCATCSRWVHETCVSYQLGKGKLLPFITNYVFVCKNCSAS. 8 residues coordinate Zn(2+): cysteine 37, cysteine 39, cysteine 52, cysteine 55, histidine 60, cysteine 63, cysteine 84, and cysteine 87. Residues 216 to 251 form a disordered region; it reads ASLSKNNRQKRKFPGTDSGPTGKKGRPSSDITANVK. Residues 288–510 enclose the B30.2/SPRY domain; that stretch reads SSDWAGKPIP…VSVNFGPAFK (223 aa).

As to quaternary structure, core component of several methyltransferase-containing complexes. Component of the SET1C/COMPASS complex, composed at least of the catalytic subunit Set1, wds/WDR5, Wdr82, Rbbp5, ash2, Cfp1/CXXC1, hcf and Dpy-30L1. Component of the MLL3/4 (Histone-lysine N-methyltransferase/demethylase TRR) complex composed at least of the catalytic subunit trr, ash2, Rbbp5, Dpy-30L1, wds, hcf, ptip, Pa1, Utx, Lpt and Ncoa6. Interacts with hcf. Interacts with trr. In terms of assembly, interacts (via B30.2/SPRY domain) with sktl; the interaction is direct. In larvae and pupae, expressed in imaginal disks, salivary gland and fat body cells. No expression detected in central nervous system (at protein level).

It is found in the nucleus. Its subcellular location is the chromosome. Functionally, transcriptional regulator. Regulates a number of genes involved in wing development including activation of net and bs and repression of rho and kni and controls vein-intervein patterning during wing development. Required for correct expression of a number of homeotic genes including Scr in the first leg imaginal disk and Ubx in the third leg imaginal disk and haltere disks. Required for stabilization of the histone-lysine N-methyltransferase trr and for trimethylation of 'Lys-4' of histone H3. Together with sktl probably plays a role in maintenance of transcriptionally active chromatin through down-regulation of histone H1 hyperphosphorylation. The protein is Set1/Ash2 histone methyltransferase complex subunit ASH2 of Drosophila melanogaster (Fruit fly).